A 146-amino-acid chain; its full sequence is NADH-quinone oxidoreductase subunit A (146 aa).

The next 3 helical transmembrane spans lie at 16 to 36 (FAIFLIVAIGLCCLMLIGGWF), 68 to 88 (FYLVAMFFVIFDVEALYLFAW), and 98 to 118 (VGFVEAAIFILVLLAGLVYLV).

Belongs to the complex I subunit 3 family. In terms of assembly, NDH-1 is composed of 13 different subunits. Subunits NuoA, H, J, K, L, M, N constitute the membrane sector of the complex.

The protein resides in the cell inner membrane. It catalyses the reaction a quinone + NADH + 5 H(+)(in) = a quinol + NAD(+) + 4 H(+)(out). Its function is as follows. NDH-1 shuttles electrons from NADH, via FMN and iron-sulfur (Fe-S) centers, to quinones in the respiratory chain. The immediate electron acceptor for the enzyme in this species is believed to be ubiquinone. Couples the redox reaction to proton translocation (for every two electrons transferred, four hydrogen ions are translocated across the cytoplasmic membrane), and thus conserves the redox energy in a proton gradient. This is NADH-quinone oxidoreductase subunit A from Enterobacter sp. (strain 638).